Reading from the N-terminus, the 69-residue chain is DNA-directed RNA polymerase subunit epsilon (69 aa).

Belongs to the RNA polymerase subunit epsilon family. In terms of assembly, monomer. RNAP is composed of a core of 2 alpha, a beta and a beta' subunit. The core is associated with a delta subunit, and at least one of epsilon or omega. When a sigma factor is associated with the core the holoenzyme is formed, which can initiate transcription.

The protein resides in the cytoplasm. It localises to the nucleoid. The enzyme catalyses RNA(n) + a ribonucleoside 5'-triphosphate = RNA(n+1) + diphosphate. In terms of biological role, a non-essential component of RNA polymerase (RNAP). Has a similar structure to bacteriophage T7 protein Gp2 (AC P03704), which is known to bind to RNAP in the DNA binding-cleft. Unlike Gp2 however, this protein does not inhibit transcription initiation. In vitro reconstitution experiments show this subunit is dispensible. The sequence is that of DNA-directed RNA polymerase subunit epsilon from Bacillus subtilis (strain 168).